Reading from the N-terminus, the 151-residue chain is Small ribosomal subunit protein uS15y (151 aa).

It belongs to the universal ribosomal protein uS15 family.

This chain is Small ribosomal subunit protein uS15y, found in Oryza sativa subsp. japonica (Rice).